The primary structure comprises 209 residues: Imidazole glycerol phosphate synthase subunit HisH (209 aa).

The Glutamine amidotransferase type-1 domain occupies 1-205 (MIAIIDYGMG…KGVVETWKSS (205 aa)). The active-site Nucleophile is the C79. Residues H180 and E182 contribute to the active site.

Heterodimer of HisH and HisF.

Its subcellular location is the cytoplasm. It carries out the reaction 5-[(5-phospho-1-deoxy-D-ribulos-1-ylimino)methylamino]-1-(5-phospho-beta-D-ribosyl)imidazole-4-carboxamide + L-glutamine = D-erythro-1-(imidazol-4-yl)glycerol 3-phosphate + 5-amino-1-(5-phospho-beta-D-ribosyl)imidazole-4-carboxamide + L-glutamate + H(+). It catalyses the reaction L-glutamine + H2O = L-glutamate + NH4(+). Its pathway is amino-acid biosynthesis; L-histidine biosynthesis; L-histidine from 5-phospho-alpha-D-ribose 1-diphosphate: step 5/9. IGPS catalyzes the conversion of PRFAR and glutamine to IGP, AICAR and glutamate. The HisH subunit catalyzes the hydrolysis of glutamine to glutamate and ammonia as part of the synthesis of IGP and AICAR. The resulting ammonia molecule is channeled to the active site of HisF. The chain is Imidazole glycerol phosphate synthase subunit HisH from Bacillus anthracis (strain CDC 684 / NRRL 3495).